We begin with the raw amino-acid sequence, 270 residues long: Phosphatidylglycerol--prolipoprotein diacylglyceryl transferase (270 aa).

4 consecutive transmembrane segments (helical) span residues 19 to 39 (FPVY…LWLA), 53 to 73 (FVDL…AYYV), 92 to 112 (QGGL…IIYA), and 117 to 137 (ISFW…QAIG). An a 1,2-diacyl-sn-glycero-3-phospho-(1'-sn-glycerol)-binding site is contributed by Arg138. The next 3 helical transmembrane spans lie at 178–198 (HPTF…LLLL), 206–226 (GELF…VEEL), and 236–256 (LRIA…FIIV).

This sequence belongs to the Lgt family.

The protein resides in the cell membrane. It carries out the reaction L-cysteinyl-[prolipoprotein] + a 1,2-diacyl-sn-glycero-3-phospho-(1'-sn-glycerol) = an S-1,2-diacyl-sn-glyceryl-L-cysteinyl-[prolipoprotein] + sn-glycerol 1-phosphate + H(+). It participates in protein modification; lipoprotein biosynthesis (diacylglyceryl transfer). Catalyzes the transfer of the diacylglyceryl group from phosphatidylglycerol to the sulfhydryl group of the N-terminal cysteine of a prolipoprotein, the first step in the formation of mature lipoproteins. This chain is Phosphatidylglycerol--prolipoprotein diacylglyceryl transferase, found in Bacillus cytotoxicus (strain DSM 22905 / CIP 110041 / 391-98 / NVH 391-98).